The primary structure comprises 830 residues: Serine/threonine-protein kinase atg1 (830 aa).

The region spanning 14–307 is the Protein kinase domain; that stretch reads YVIRSEIGRG…YDGFFSSIVV (294 aa). Residues 20–28 and Lys43 each bind ATP; that span reads IGRGSFAIV. The Proton acceptor role is filled by Asp157. Ser346 bears the Phosphoserine mark. Over residues 448–468 the composition is skewed to polar residues; the sequence is TQLSNESLTHEQSINGNSPSP. The segment at 448 to 480 is disordered; it reads TQLSNESLTHEQSINGNSPSPNEGVFQGSFSPE.

It belongs to the protein kinase superfamily. Ser/Thr protein kinase family. APG1/unc-51/ULK1 subfamily. Homodimer. Component of the atg1 kinase complex composed of at least atg1, atg13, atg17 and atg101. Interacts directly with atg13. In terms of processing, phosphorylated. Dephosphorylated under depletion of nitrogen.

It carries out the reaction L-seryl-[protein] + ATP = O-phospho-L-seryl-[protein] + ADP + H(+). The catalysed reaction is L-threonyl-[protein] + ATP = O-phospho-L-threonyl-[protein] + ADP + H(+). Functionally, serine/threonine protein kinase involved in the cytoplasm to vacuole transport (Cvt) and found to be essential in autophagy, where it is required for the formation of autophagosomes. Involved in the clearance of protein aggregates which cannot be efficiently cleared by the proteasome. Required for selective autophagic degradation of the nucleus (nucleophagy) as well as for mitophagy which contributes to regulate mitochondrial quantity and quality by eliminating the mitochondria to a basal level to fulfill cellular energy requirements and preventing excess ROS production. Also involved in endoplasmic reticulum-specific autophagic process, in selective removal of ER-associated degradation (ERAD) substrates. Plays a key role in ATG9 and ATG23 cycling through the pre-autophagosomal structure and is necessary to promote ATG18 binding to ATG9 through phosphorylation of ATG9. Catalyzes phosphorylation of ATG4, decreasing the interaction between ATG4 and ATG8 and impairing deconjugation of PE-conjugated forms of ATG8. Autophagy functions to supply nitrogen and is activated when cells cannot access exogenous nitrogen, thus ensuring that they can adapt and subsequently propagate. Finally, atg13 is also required for glycogen storage during stationary phase and has a role in meiosis and sporulation. This Schizosaccharomyces pombe (strain 972 / ATCC 24843) (Fission yeast) protein is Serine/threonine-protein kinase atg1.